The sequence spans 322 residues: Thymidylate synthase (322 aa).

Residues Arg25 and Arg184–Arg185 each bind dUMP. Residue Cys204 is the Nucleophile of the active site. DUMP contacts are provided by residues Arg224–Asp227, Asn235, and His265–Tyr267. Position 227 (Asp227) interacts with (6R)-5,10-methylene-5,6,7,8-tetrahydrofolate. Ala321 contributes to the (6R)-5,10-methylene-5,6,7,8-tetrahydrofolate binding site.

Belongs to the thymidylate synthase family. Bacterial-type ThyA subfamily. In terms of assembly, homodimer.

It is found in the cytoplasm. The enzyme catalyses dUMP + (6R)-5,10-methylene-5,6,7,8-tetrahydrofolate = 7,8-dihydrofolate + dTMP. It functions in the pathway pyrimidine metabolism; dTTP biosynthesis. Functionally, catalyzes the reductive methylation of 2'-deoxyuridine-5'-monophosphate (dUMP) to 2'-deoxythymidine-5'-monophosphate (dTMP) while utilizing 5,10-methylenetetrahydrofolate (mTHF) as the methyl donor and reductant in the reaction, yielding dihydrofolate (DHF) as a by-product. This enzymatic reaction provides an intracellular de novo source of dTMP, an essential precursor for DNA biosynthesis. In Leuconostoc mesenteroides subsp. mesenteroides (strain ATCC 8293 / DSM 20343 / BCRC 11652 / CCM 1803 / JCM 6124 / NCDO 523 / NBRC 100496 / NCIMB 8023 / NCTC 12954 / NRRL B-1118 / 37Y), this protein is Thymidylate synthase.